The chain runs to 397 residues: Lysophospholipid transporter LplT (397 aa).

Over 1–17 (MSESVHTNTSLWSKGMK) the chain is Periplasmic. A helical membrane pass occupies residues 18–38 (AVIVAQFLSAFGDNALLFATL). Residues 39 to 52 (ALLKAQFYPEWSQP) lie on the Cytoplasmic side of the membrane. The chain crosses the membrane as a helical span at residues 53 to 73 (ILQMVFVGAYILFAPFVGQVA). Topologically, residues 74 to 90 (DSFAKGRVMMFANGLKL) are periplasmic. A helical membrane pass occupies residues 91-111 (LGAASICFGINPFLGYTLVGV). Topologically, residues 112–144 (GAAAYSPAKYGILGELTTGSKLVKANGLMEAST) are cytoplasmic. Residues 145–165 (IAAILLGSVAGGVLADWHVLV) traverse the membrane as a helical segment. A topological domain (periplasmic) is located at residue alanine 166. Residues 167-187 (LAACALAYGGAVVANIYIPKL) form a helical membrane-spanning segment. The Cytoplasmic portion of the chain corresponds to 188–226 (AAARPGQSWNLINMTRSFLNACTSLWRNGETRFSLVGTS). Residues 227–247 (LFWGAGVTLRFLLVLWVPVAL) traverse the membrane as a helical segment. Topologically, residues 248–256 (GITDNATPT) are periplasmic. Residues 257-277 (YLNAMVAIGIVVGAGAAAKLV) form a helical membrane-spanning segment. Residues 278–280 (TLE) lie on the Cytoplasmic side of the membrane. Residues 281–301 (TVSRCMPAGILIGVVVLIFSL) traverse the membrane as a helical segment. Topologically, residues 302-304 (QHE) are periplasmic. Residues 305–325 (LLPAYALLMLIGVLGGFFVVP) traverse the membrane as a helical segment. Residues 326–343 (LNALLQERGKKSVGAGNA) lie on the Cytoplasmic side of the membrane. Residues 344 to 364 (IAVQNLGENSAMLLMLGIYSL) traverse the membrane as a helical segment. Topologically, residues 365 to 366 (AV) are periplasmic. A helical transmembrane segment spans residues 367 to 387 (MVGIPVVPIGIGFGALFALAI). The Cytoplasmic segment spans residues 388–397 (TALWIWQRRY).

It belongs to the major facilitator superfamily. LplT (TC 2.A.1.42) family.

It is found in the cell inner membrane. Functionally, catalyzes the facilitated diffusion of 2-acyl-glycero-3-phosphoethanolamine (2-acyl-GPE) into the cell. This is Lysophospholipid transporter LplT from Escherichia coli O127:H6 (strain E2348/69 / EPEC).